The chain runs to 1033 residues: SIT4-associating protein SAP190 (1033 aa).

Disordered stretches follow at residues 32 to 82, 147 to 213, 768 to 813, and 828 to 1033; these read DQDD…TTES, PEII…QVET, FGND…HDSG, and ENEE…KEAF. The span at 158 to 170 shows a compositional bias: basic and acidic residues; that stretch reads ILIERDRKDKKED. Positions 171–182 are enriched in acidic residues; sequence AEEGGDSEETTN. Residues 183-195 are compositionally biased toward basic and acidic residues; it reads DSDHDSGDERSVD. Residue Ser774 is modified to Phosphoserine. Acidic residues-rich tracts occupy residues 784–793 and 828–838; these read SEDIIGDTEG and ENEEDYAEYSD. Ser857, Ser862, and Ser892 each carry phosphoserine. Residues 858–879 show a composition bias toward basic and acidic residues; sequence DDGKSKSAESEFTDKISEHRDG. Residues 909–924 are compositionally biased toward polar residues; it reads SRSQPSDPKLQDQNIF. Acidic residues predominate over residues 932 to 944; that stretch reads GVGDDDDYMDPND. Phosphothreonine is present on Thr990. Ser991 carries the post-translational modification Phosphoserine. The segment covering 1000-1018 has biased composition (acidic residues); that stretch reads ISSDEEDSEDEDEENDMGN.

The protein belongs to the SAPS family. Associates with the SIT4 protein phosphatase catalytic subunit in a cell-cycle-dependent manner. Post-translationally, hyperphosphorylated in the absence of SIT4.

The protein resides in the cytoplasm. Functionally, positive regulator of protein phosphatase SIT4. Involved in the general amino acid control (GAAC) response regulated by TOR. Involved in the dephosphorylation of the elongator complex subunit IKI3. The protein is SIT4-associating protein SAP190 (SAP190) of Saccharomyces cerevisiae (strain AWRI1631) (Baker's yeast).